The chain runs to 256 residues: Cysteine-rich repeat secretory protein 42 (256 aa).

An N-terminal signal peptide occupies residues 1–26 (MSSVFGSVHILAMIAIQLLLTHSVSS). 2 Gnk2-homologous domains span residues 33 to 136 (YLHH…SVAS) and 142 to 253 (YEND…LYPF).

It belongs to the cysteine-rich repeat secretory protein family.

It is found in the secreted. In Arabidopsis thaliana (Mouse-ear cress), this protein is Cysteine-rich repeat secretory protein 42 (CRRSP42).